Consider the following 293-residue polypeptide: ATP synthase gamma chain (293 aa).

It belongs to the ATPase gamma chain family. In terms of assembly, F-type ATPases have 2 components, CF(1) - the catalytic core - and CF(0) - the membrane proton channel. CF(1) has five subunits: alpha(3), beta(3), gamma(1), delta(1), epsilon(1). CF(0) has three main subunits: a, b and c.

The protein localises to the cell membrane. Its function is as follows. Produces ATP from ADP in the presence of a proton gradient across the membrane. The gamma chain is believed to be important in regulating ATPase activity and the flow of protons through the CF(0) complex. This chain is ATP synthase gamma chain, found in Methylacidiphilum infernorum (isolate V4) (Methylokorus infernorum (strain V4)).